The sequence spans 128 residues: Glycine cleavage system H protein (128 aa).

Residues 24–106 (VYSVGITEHA…YTDGWLFSIK (83 aa)) form the Lipoyl-binding domain. An N6-lipoyllysine modification is found at lysine 65.

The protein belongs to the GcvH family. The glycine cleavage system is composed of four proteins: P, T, L and H. (R)-lipoate serves as cofactor.

Its function is as follows. The glycine cleavage system catalyzes the degradation of glycine. The H protein shuttles the methylamine group of glycine from the P protein to the T protein. The chain is Glycine cleavage system H protein from Yersinia pseudotuberculosis serotype O:1b (strain IP 31758).